We begin with the raw amino-acid sequence, 84 residues long: Putative antitoxin VapB37 (84 aa).

Functionally, probable antitoxin component of a type II toxin-antitoxin (TA) system. Its putative cognate toxin is VapC37. The polypeptide is Putative antitoxin VapB37 (vapB37) (Mycobacterium tuberculosis (strain CDC 1551 / Oshkosh)).